The following is a 172-amino-acid chain: Adenine phosphoribosyltransferase (172 aa).

Belongs to the purine/pyrimidine phosphoribosyltransferase family. Homodimer.

The protein resides in the cytoplasm. It catalyses the reaction AMP + diphosphate = 5-phospho-alpha-D-ribose 1-diphosphate + adenine. The protein operates within purine metabolism; AMP biosynthesis via salvage pathway; AMP from adenine: step 1/1. Its function is as follows. Catalyzes a salvage reaction resulting in the formation of AMP, that is energically less costly than de novo synthesis. This chain is Adenine phosphoribosyltransferase, found in Streptococcus agalactiae serotype Ia (strain ATCC 27591 / A909 / CDC SS700).